The following is a 360-amino-acid chain: Glutamate 5-kinase (360 aa).

Lysine 7 provides a ligand contact to ATP. Residues serine 47, aspartate 134, and asparagine 146 each coordinate substrate. ATP is bound by residues 166–167 and 210–216; these read TD and TGGISTK. A PUA domain is found at 275 to 356; the sequence is VGKITLDDGA…SSIIVVHRDV (82 aa).

The protein belongs to the glutamate 5-kinase family.

The protein resides in the cytoplasm. The catalysed reaction is L-glutamate + ATP = L-glutamyl 5-phosphate + ADP. It functions in the pathway amino-acid biosynthesis; L-proline biosynthesis; L-glutamate 5-semialdehyde from L-glutamate: step 1/2. Catalyzes the transfer of a phosphate group to glutamate to form L-glutamate 5-phosphate. The polypeptide is Glutamate 5-kinase (Prochlorococcus marinus (strain AS9601)).